Reading from the N-terminus, the 72-residue chain is Conotoxin Lt6.3 (72 aa).

A signal peptide spans 1–22 (MKLTSVVIVAVLFLAACQLTTS). The propeptide occupies 23-46 (DGSRGTWKDRAVRSITKVSMLRWP). 3 disulfide bridges follow: cysteine 47-cysteine 61, cysteine 54-cysteine 64, and cysteine 60-cysteine 71.

This sequence belongs to the conotoxin O1 superfamily. In terms of tissue distribution, expressed by the venom duct.

Its subcellular location is the secreted. This is Conotoxin Lt6.3 from Conus litteratus (Lettered cone).